The sequence spans 877 residues: Potassium transporter 23 (877 aa).

Disordered regions lie at residues 1-60 (MDDD…SLDG) and 72-92 (ASAG…RASS). Over 1-126 (MDDDDSGIQE…RGAHGHSSKE (126 aa)) the chain is Cytoplasmic. Residues 12–28 (PAPPPPPPPPPPPPPPL) show a composition bias toward pro residues. Gly residues predominate over residues 76–86 (GASGGGGGGGP). A helical membrane pass occupies residues 127 to 147 (ISMLSTVAMAFQTLGVVYGDM). At 148–173 (GTSPLYVFSDVFSKVPIKSEVEILGA) the chain is on the extracellular side. A helical membrane pass occupies residues 174–194 (LSLVMYTIALIPFAKYVFIVL). The Cytoplasmic portion of the chain corresponds to 195-260 (KANDNGEGGT…SLEKNPVFKN (66 aa)). The chain crosses the membrane as a helical span at residues 261 to 281 (ILLFLVLMGTSMVIGDGILTP). The Extracellular portion of the chain corresponds to 282–295 (SMSVMSAVSGLQGR). The chain crosses the membrane as a helical span at residues 296–316 (VPGFGTDAVVIVSILFLVLLF). The Cytoplasmic portion of the chain corresponds to 317-325 (SVQRFGTGK). The helical transmembrane segment at 326–346 (VGFMFAPILALWFINLGTIGI) threads the bilayer. Over 347-379 (YNLAKYDISVVRAFNPVYIYLFFQTNGIKAWSA) the chain is Extracellular. A helical transmembrane segment spans residues 380–400 (LGGCVLCITGAEAMFADLGHF). Over 401–406 (SVKSIQ) the chain is Cytoplasmic. The chain crosses the membrane as a helical span at residues 407–427 (VAFTAVVFPCLLIAYMGQAAY). The Extracellular segment spans residues 428-441 (LMKYPFAVERIFYD). A helical transmembrane segment spans residues 442–462 (SVPEILFWPVFVIATLAAMIA). Residues 463–498 (SQAMISATFSCIKQAMALGCFPRIKIIHTSKKVMGQ) are Cytoplasmic-facing. The chain crosses the membrane as a helical span at residues 499 to 519 (IYIPVMNWFLMVMCIIIVATF). Topologically, residues 520-524 (RSTND) are extracellular. Residues 525–545 (IANAYGIAEVGVMMVSTALVT) traverse the membrane as a helical segment. Residues 546–555 (LVMLLIWQTN) are Cytoplasmic-facing. Residues 556 to 578 (LFLVMCFPVIFGSVEFVYLTAVL) form a helical membrane-spanning segment. Over 579 to 583 (SKIQE) the chain is Extracellular. Residues 584–604 (GGWLPLAFSSLFLCIMYTWNY) traverse the membrane as a helical segment. The Cytoplasmic portion of the chain corresponds to 605–877 (GSVLKYQSEM…IMRVGMTYMV (273 aa)).

This sequence belongs to the HAK/KUP transporter (TC 2.A.72.3) family.

The protein localises to the membrane. In terms of biological role, high-affinity potassium transporter. The sequence is that of Potassium transporter 23 (HAK23) from Oryza sativa subsp. japonica (Rice).